Consider the following 123-residue polypeptide: MARIGGVNVPVNKRVVVALTYIYGIGPSLASKICEGCGIGEDVLVSSLSDEDVVKIRNFIRSGCVVEADLRKEVAMNIKFLMDIGCYRGLRHRKKLPVRGQRTHTNARTRKGGTRLAVAVKKG.

The protein belongs to the universal ribosomal protein uS13 family. As to quaternary structure, part of the 30S ribosomal subunit. Forms a loose heterodimer with protein S19. Forms two bridges to the 50S subunit in the 70S ribosome.

In terms of biological role, located at the top of the head of the 30S subunit, it contacts several helices of the 16S rRNA. In the 70S ribosome it contacts the 23S rRNA (bridge B1a) and protein L5 of the 50S subunit (bridge B1b), connecting the 2 subunits; these bridges are implicated in subunit movement. Contacts the tRNAs in the A and P-sites. The protein is Small ribosomal subunit protein uS13 of Anaplasma marginale (strain St. Maries).